Reading from the N-terminus, the 130-residue chain is MAKSPSRSPRKRVRKQVADGMAHIHASFNNTIITITDRQGNALSWATSGGSGFRGSRKSTPFAAQVAAERAGVAAQDYGVKNLEVFVKGPGPGRESAIRALNSVGYKITNITDVTPIPHNGCRPPKKRRV.

This sequence belongs to the universal ribosomal protein uS11 family. In terms of assembly, part of the 30S ribosomal subunit. Interacts with proteins S7 and S18. Binds to IF-3.

Located on the platform of the 30S subunit, it bridges several disparate RNA helices of the 16S rRNA. Forms part of the Shine-Dalgarno cleft in the 70S ribosome. The sequence is that of Small ribosomal subunit protein uS11 from Shewanella violacea (strain JCM 10179 / CIP 106290 / LMG 19151 / DSS12).